Reading from the N-terminus, the 253-residue chain is Phosphate import ATP-binding protein PstB 1 (253 aa).

The ABC transporter domain occupies 7–248; sequence LQIRDLSVYY…PKRKETEDYI (242 aa). 39-46 is a binding site for ATP; the sequence is GPSGSGKS.

The protein belongs to the ABC transporter superfamily. Phosphate importer (TC 3.A.1.7) family. In terms of assembly, the complex is composed of two ATP-binding proteins (PstB), two transmembrane proteins (PstC and PstA) and a solute-binding protein (PstS).

It is found in the cell membrane. The enzyme catalyses phosphate(out) + ATP + H2O = ADP + 2 phosphate(in) + H(+). In terms of biological role, part of the ABC transporter complex PstSACB involved in phosphate import. Responsible for energy coupling to the transport system. This Streptococcus pyogenes serotype M12 (strain MGAS9429) protein is Phosphate import ATP-binding protein PstB 1.